Reading from the N-terminus, the 549-residue chain is Cation/acetate symporter ActP (549 aa).

Residues 1–32 are Periplasmic-facing; it reads MKRVLTALAATLPFAANAADAISGAVERQPTN. Residues 33 to 55 traverse the membrane as a helical segment; the sequence is WQAIIMFLIFVVFTLGITYWASK. The Cytoplasmic portion of the chain corresponds to 56-75; the sequence is RVRSRSDYYTAGGNITGFQN. Residues 76-98 form a helical membrane-spanning segment; it reads GLAIAGDYMSAASFLGISALVFT. Topologically, residues 99 to 102 are periplasmic; that stretch reads SGYD. A helical membrane pass occupies residues 103-125; that stretch reads GLIYSLGFLVGWPIILFLIAERL. Topologically, residues 126–145 are cytoplasmic; sequence RNLGRYTSADVASYRLKQGP. A helical transmembrane segment spans residues 146-168; the sequence is IRILSACGSLVVVALYLIAQMVG. Topologically, residues 169 to 182 are periplasmic; the sequence is AGKLIELLFGLNYH. A helical transmembrane segment spans residues 183-205; the sequence is IAVVLVGVLMMMYVLFGGMLATT. Topologically, residues 206 to 211 are cytoplasmic; it reads WVQIIK. Residues 212–234 form a helical membrane-spanning segment; that stretch reads AVLLLFGASFMAFMVMKHVGFSF. Topologically, residues 235–260 are periplasmic; sequence NNLFSEAMAVHPKGVDIMKPGGLVKD. Residues 261 to 283 form a helical membrane-spanning segment; sequence PISALSLGLGLMFGTAGLPHILM. The Cytoplasmic portion of the chain corresponds to 284–302; sequence RFFTVSDAREARKSVFYAT. A helical membrane pass occupies residues 303–325; sequence GFMGYFYILTFIIGFGAIMLVGA. Over 326 to 349 the chain is Periplasmic; it reads NPEYKDAAGHLIGGNNMAAVHLAN. The chain crosses the membrane as a helical span at residues 350–372; that stretch reads AVGGNLFLGFISAVAFATILAVV. Over 373 to 401 the chain is Cytoplasmic; the sequence is ADLTLAGASAVSHDLYANVFKKGATEREE. A helical membrane pass occupies residues 402-424; the sequence is LRVSKITVLILGVIAIILGVLFE. The Periplasmic portion of the chain corresponds to 425–427; it reads NQN. A helical transmembrane segment spans residues 428 to 450; that stretch reads IAFMVGLAFAIAASCNFPIILLS. At 451-461 the chain is on the cytoplasmic side; that stretch reads MYWSKLTTRGA. Residues 462–484 traverse the membrane as a helical segment; the sequence is MLGGWLGLITAVVLMILGPTIWV. The Periplasmic portion of the chain corresponds to 485-493; sequence QILGHEKAI. The chain crosses the membrane as a helical span at residues 494–516; that stretch reads FPYEYPALFSISVAFLGIWFFSA. Residues 517 to 549 lie on the Cytoplasmic side of the membrane; that stretch reads TDNSAEGARERELFRAQFIRSQTGFGVEQGRAH.

Belongs to the sodium:solute symporter (SSF) (TC 2.A.21) family.

The protein resides in the cell inner membrane. In terms of biological role, transports acetate. In Shigella flexneri, this protein is Cation/acetate symporter ActP (actP).